Here is a 253-residue protein sequence, read N- to C-terminus: Tryptophan synthase alpha chain (253 aa).

Active-site proton acceptor residues include glutamate 47 and aspartate 58.

Belongs to the TrpA family. In terms of assembly, tetramer of two alpha and two beta chains.

It carries out the reaction (1S,2R)-1-C-(indol-3-yl)glycerol 3-phosphate + L-serine = D-glyceraldehyde 3-phosphate + L-tryptophan + H2O. It participates in amino-acid biosynthesis; L-tryptophan biosynthesis; L-tryptophan from chorismate: step 5/5. Functionally, the alpha subunit is responsible for the aldol cleavage of indoleglycerol phosphate to indole and glyceraldehyde 3-phosphate. This chain is Tryptophan synthase alpha chain, found in Syntrophotalea carbinolica (strain DSM 2380 / NBRC 103641 / GraBd1) (Pelobacter carbinolicus).